We begin with the raw amino-acid sequence, 1006 residues long: Multiple C2 domain and transmembrane region protein 9 (1006 aa).

Positions 1–108 (MSNIKLGVEV…PRSEAAPFNY (108 aa)) constitute a C2 1 domain. Positions 135-156 (VTPSVPTPVPESPQAYSPSPRK) are disordered. 3 consecutive C2 domains span residues 251–371 (RGTE…PQWY), 411–536 (SDSS…DRWV), and 579–704 (NSSD…THAY). Ca(2+)-binding residues include D284, D290, D337, D339, and D344. A run of 2 helical transmembrane segments spans residues 842–862 (MLVT…AVIG) and 946–966 (ATAI…ITPF).

This sequence belongs to the MCTP family. It depends on Ca(2+) as a cofactor. As to expression, expressed in incipient leaf primordia and roots meristems. Observed in flowers.

The protein localises to the cell membrane. Its subcellular location is the cytoplasm. May function as a signaling molecule by regulating the trafficking of other regulators. The polypeptide is Multiple C2 domain and transmembrane region protein 9 (Arabidopsis thaliana (Mouse-ear cress)).